The primary structure comprises 370 residues: N-acetyldiaminopimelate deacetylase (370 aa).

Residue Asp67 is part of the active site. Glu126 functions as the Proton acceptor in the catalytic mechanism.

The protein belongs to the peptidase M20A family. N-acetyldiaminopimelate deacetylase subfamily.

The enzyme catalyses N-acetyl-(2S,6S)-2,6-diaminopimelate + H2O = (2S,6S)-2,6-diaminopimelate + acetate. Its pathway is amino-acid biosynthesis; L-lysine biosynthesis via DAP pathway; LL-2,6-diaminopimelate from (S)-tetrahydrodipicolinate (acetylase route): step 3/3. In terms of biological role, catalyzes the conversion of N-acetyl-diaminopimelate to diaminopimelate and acetate. This is N-acetyldiaminopimelate deacetylase from Exiguobacterium sibiricum (strain DSM 17290 / CCUG 55495 / CIP 109462 / JCM 13490 / 255-15).